We begin with the raw amino-acid sequence, 36 residues long: Potassium channel toxin alpha-KTx 2.7 (36 aa).

Intrachain disulfides connect cysteine 7–cysteine 29, cysteine 13–cysteine 34, and cysteine 17–cysteine 36.

It belongs to the short scorpion toxin superfamily. Potassium channel inhibitor family. Alpha-KTx 02 subfamily. Expressed by the venom gland.

Its subcellular location is the secreted. Inhibitor of voltage-gated potassium channels (Kv). This protein is capable of displacing the binding of radio-labeled noxiustoxin (AC P08815) to rat brain synaptosomes with high affinity (about 100 pM). It is also capable of inhibiting transient potassium-currents (resembling I(A)-type currents), in cultured rat cerebellar granule cells. About 50% of the peak currents are reduced by application of a 1.5 uM solution of this toxin. Is lethal to mice (when less than 100 ug are injected). This Centruroides limpidus (Mexican scorpion) protein is Potassium channel toxin alpha-KTx 2.7.